The sequence spans 63 residues: Chromatin protein Cren7 (63 aa).

It belongs to the Cren7 family. In terms of assembly, monomer. In terms of processing, methylated at multiple sites, to varying extents.

It is found in the chromosome. Its subcellular location is the cytoplasm. A chromatin protein, binds double-stranded DNA without sequence specificity. Constrains negative DNA supercoils. The polypeptide is Chromatin protein Cren7 (Pyrobaculum calidifontis (strain DSM 21063 / JCM 11548 / VA1)).